A 454-amino-acid chain; its full sequence is Protein phosphatase 1F (454 aa).

A compositionally biased stretch (polar residues) spans 1–12 (MSSGAPQKSSPM). The tract at residues 1-28 (MSSGAPQKSSPMASGAEETPGFLDTLLQ) is disordered. Residues 156-413 (LVSIHAIRNT…DNITVMVVFL (258 aa)) enclose the PPM-type phosphatase domain. Mn(2+) contacts are provided by D198, G199, D360, and D404. The segment at 419 to 454 (LLEGGNQGEGDPQAEGRRQDLPSSLPEPETQAPPRS) is disordered. S454 bears the Phosphoserine mark.

Belongs to the PP2C family. Associates with FEM1B. Requires Mg(2+) as cofactor. The cofactor is Mn(2+).

The catalysed reaction is O-phospho-L-seryl-[protein] + H2O = L-seryl-[protein] + phosphate. The enzyme catalyses O-phospho-L-threonyl-[protein] + H2O = L-threonyl-[protein] + phosphate. Its function is as follows. Dephosphorylates and concomitantly deactivates CaM-kinase II activated upon autophosphorylation, and CaM-kinases IV and I activated upon phosphorylation by CaM-kinase kinase. Promotes apoptosis. This Homo sapiens (Human) protein is Protein phosphatase 1F (PPM1F).